Reading from the N-terminus, the 350-residue chain is MKMTFCRAVCLAAAFLLMGCDEAPETTTASPAAQVLEGKTMGTLWRVSVVGIDAKRAAELQTKIQTQLDADDWLLSTYKNDSALMRFNHSRSLAPWPVSEAMADIVTSALRIGAKTDGAMDITVGPLVNLWGFGPDRQPLHIPTPAQIDAAKAKTGLQHLQVIDRAGHQFLQKDLPDLYVDLSTVGEGYAADHLARLMEQEGIARYLVSVGGALSSRGMNAQGQPWRVAIQKPTDRENAVQAIVDINGHGISTSGSYRNYYELDGKRVSHVIDPQTGRPIEHNLVSVTVIAPTALEADGWDTGLMVLGTQKAQEVVRREGLAVFMIMKEGEGFKTWMSPQFKTFLVSDKN.

An N-terminal signal peptide occupies residues 1-19; it reads MKMTFCRAVCLAAAFLLMG. The N-palmitoyl cysteine moiety is linked to residue C20. C20 carries the S-diacylglycerol cysteine lipid modification. FAD contacts are provided by residues M41, Y78, 119-121, and D181; that span reads AMD. T184 provides a ligand contact to Mg(2+). E187 and I272 together coordinate FAD. Mg(2+)-binding residues include D298, D301, and T302.

Belongs to the ApbE family. Homodimer. The cofactor is Mg(2+).

Its subcellular location is the cell inner membrane. It carries out the reaction L-threonyl-[protein] + FAD = FMN-L-threonyl-[protein] + AMP + H(+). Flavin transferase that catalyzes the transfer of the FMN moiety of FAD and its covalent binding to the hydroxyl group of a threonine residue in a target flavoprotein such as NqrB and NqrC, two subunits of the NQR complex. The sequence is that of FAD:protein FMN transferase from Salmonella typhimurium (strain LT2 / SGSC1412 / ATCC 700720).